The chain runs to 102 residues: UPF0235 protein Noc_3000 (102 aa).

The protein belongs to the UPF0235 family.

The protein is UPF0235 protein Noc_3000 of Nitrosococcus oceani (strain ATCC 19707 / BCRC 17464 / JCM 30415 / NCIMB 11848 / C-107).